We begin with the raw amino-acid sequence, 257 residues long: AT-hook motif nuclear-localized protein 16 (257 aa).

The disordered stretch occupies residues 1–71 (MAGGTALTPT…SKNKPKPPII (71 aa)). The a.T hook DNA-binding region spans 53 to 65 (KRPRGRPAGSKNK). Positions 77–214 (PNSLRANAVE…DEAASMQNQQ (138 aa)) constitute a PPC domain.

Interacts with FVE/MSI4 and MSI5 which are components of HDAC corepressor complexes. Preferentially expressed in the inflorescence meristem and young floral buds, as well as in seedling-stage vegetative meristems. Widely expressed in flowers, roots and stems, with relatively low expression in leaves.

The protein localises to the nucleus. In terms of biological role, transcription factor that specifically binds AT-rich DNA sequences related to the nuclear matrix attachment regions (MARs). Encodes a nuclear matrix protein that acts in the maintenance of genomic integrity by silencing TEs and repeat-containing genes through epigenetic machinery. Acts as a chromatin remodeling factor that modifies the architecture of FLC and FWA chromatin by modulating both H3 acetylation and methylation leading to the regulation of FLC and FWA expression. Negatively regulates floral repressors including MAF4 and MAF5. Plays a transcription activation role in anther development. Regulates the expression of arabinogalactan proteins (AGPs) involved in the formation of the nexine layer of the pollen wall. Binds AGP6, AGP11, AGP23 and AGP40 promoters. The protein is AT-hook motif nuclear-localized protein 16 of Arabidopsis thaliana (Mouse-ear cress).